An 81-amino-acid chain; its full sequence is Small cysteine-rich protein 1 2 (81 aa).

Residues 1 to 19 (MGVNFNICLLLLLVATISS) form the signal peptide. A propeptide spanning residues 20-39 (QPLKATEKDDSTDENPFGIY) is cleaved from the precursor.

Belongs to the Cnidaria small cysteine-rich protein (SCRiP) family. alpha subfamily. Post-translationally, the basic myotoxic domain of rattlesnake crotamine toxins (with 6 Cys residues) has been detected in this protein. However, this protein contains 2 additional Cys at the C-terminal region. Hence, this protein may contain 4 disulfide bonds instead of the 3 suggested by the myotoxin domain.

Its subcellular location is the secreted. The protein localises to the nematocyst. Functionally, induces neurotoxic symptoms on zebrafish. Has also been claimed to be implied in calcification, but tests on homolog proteins suggest that proteins of this family have a neurotoxic function and not a calcification function. This is Small cysteine-rich protein 1 2 from Montipora capitata (Rice coral).